Reading from the N-terminus, the 652-residue chain is DNA ligase (652 aa).

NAD(+) is bound by residues 29-33 (DSDYD), 78-79 (SL), and Glu-107. The active-site N6-AMP-lysine intermediate is the Lys-109. NAD(+) is bound by residues Arg-130, Glu-164, Lys-278, and Lys-302. Positions 395, 398, 413, and 418 each coordinate Zn(2+). The 76-residue stretch at 577 to 652 (NSDAALFGLT…IEDEDWLRKL (76 aa)) folds into the BRCT domain.

Belongs to the NAD-dependent DNA ligase family. LigA subfamily. It depends on Mg(2+) as a cofactor. Requires Mn(2+) as cofactor.

It catalyses the reaction NAD(+) + (deoxyribonucleotide)n-3'-hydroxyl + 5'-phospho-(deoxyribonucleotide)m = (deoxyribonucleotide)n+m + AMP + beta-nicotinamide D-nucleotide.. DNA ligase that catalyzes the formation of phosphodiester linkages between 5'-phosphoryl and 3'-hydroxyl groups in double-stranded DNA using NAD as a coenzyme and as the energy source for the reaction. It is essential for DNA replication and repair of damaged DNA. This Streptococcus pyogenes serotype M18 (strain MGAS8232) protein is DNA ligase.